A 209-amino-acid polypeptide reads, in one-letter code: MIEIKMNIRWNVILGVIALCALAWFYSLNQETADLSELVKKPDSPDYVGYKMETTVFSPDGKKQYLALSDKIEHYTVNEQTLFTAPLVYLYPTTSNEKEKEKNANQNVDFFSTQSWKLSANQARLTKDQILYLEGNVVAQNLTSDSRLQRIETESAVVNLKTQDITSETQVKIKGKNFSSTGLKLVGNLRQQVATLKEQVKTYYEVSKQ.

A helical transmembrane segment spans residues 7 to 26 (NIRWNVILGVIALCALAWFY).

It belongs to the LptC family. Component of the lipopolysaccharide transport and assembly complex. Interacts with LptA and the LptBFG transporter complex.

It is found in the cell inner membrane. Its function is as follows. Involved in the assembly of lipopolysaccharide (LPS). Required for the translocation of LPS from the inner membrane to the outer membrane. Facilitates the transfer of LPS from the inner membrane to the periplasmic protein LptA. Could be a docking site for LptA. The polypeptide is Lipopolysaccharide export system protein LptC (Haemophilus influenzae (strain ATCC 51907 / DSM 11121 / KW20 / Rd)).